A 282-amino-acid polypeptide reads, in one-letter code: Armadillo repeat-containing protein 1 (282 aa).

Met-1 carries the N-acetylmethionine modification. One copy of the ARM repeat lies at 39-81 (GCLPGLILFMDHPNPPVVHSALLALRYLAECRANREKMKGELG). A Phosphothreonine modification is found at Thr-137. Ser-189, Ser-246, Ser-260, and Ser-267 each carry phosphoserine. The disordered stretch occupies residues 239–261 (DYLPEDESPTKEQDKAVSRVGSH). Basic and acidic residues predominate over residues 246-255 (SPTKEQDKAV).

As to quaternary structure, interacts with mitochondrial contact site and cristae organizing system (MICOS) complex components IMMT/MIC60 and MICOS10/MIC10. Interacts with mitochondrial outer membrane sorting assembly machinery (SAM) complex components SAMM50 and MTX1.

Its subcellular location is the cytoplasm. The protein resides in the mitochondrion. It localises to the mitochondrion outer membrane. Its function is as follows. In association with mitochondrial contact site and cristae organizing system (MICOS) complex components and mitochondrial outer membrane sorting assembly machinery (SAM) complex components may regulate mitochondrial dynamics playing a role in determining mitochondrial length, distribution and motility. This chain is Armadillo repeat-containing protein 1 (ARMC1), found in Bos taurus (Bovine).